Here is a 546-residue protein sequence, read N- to C-terminus: Adenine DNA glycosylase (546 aa).

The tract at residues 19–51 (RAAVGSGHRKQAASQEGRQKHAKNNSQAKPSAC) is disordered. Catalysis depends on Glu-131, which acts as the Proton donor/acceptor. Residues Cys-287, Cys-294, Cys-297, and Cys-303 each coordinate [4Fe-4S] cluster. In terms of domain architecture, Nudix hydrolase spans 364–495 (PREESSATCV…AMKKVFRVYQ (132 aa)). The Nudix box motif lies at 404 to 426 (VTWEPSEQLQRKALLQELQRWAG).

The protein belongs to the Nth/MutY family. The cofactor is [4Fe-4S] cluster.

It is found in the nucleus. The protein localises to the mitochondrion. It catalyses the reaction Hydrolyzes free adenine bases from 7,8-dihydro-8-oxoguanine:adenine mismatched double-stranded DNA, leaving an apurinic site.. In terms of biological role, involved in oxidative DNA damage repair. Initiates repair of A*oxoG to C*G by removing the inappropriately paired adenine base from the DNA backbone. Possesses both adenine and 2-OH-A DNA glycosylase activities. This is Adenine DNA glycosylase (MUTYH) from Homo sapiens (Human).